The primary structure comprises 229 residues: NAD(P)H-quinone oxidoreductase subunit K, chloroplastic (229 aa).

Cys43, Cys44, Cys108, and Cys139 together coordinate [4Fe-4S] cluster.

The protein belongs to the complex I 20 kDa subunit family. NDH is composed of at least 16 different subunits, 5 of which are encoded in the nucleus. The cofactor is [4Fe-4S] cluster.

It localises to the plastid. Its subcellular location is the chloroplast thylakoid membrane. The enzyme catalyses a plastoquinone + NADH + (n+1) H(+)(in) = a plastoquinol + NAD(+) + n H(+)(out). The catalysed reaction is a plastoquinone + NADPH + (n+1) H(+)(in) = a plastoquinol + NADP(+) + n H(+)(out). Functionally, NDH shuttles electrons from NAD(P)H:plastoquinone, via FMN and iron-sulfur (Fe-S) centers, to quinones in the photosynthetic chain and possibly in a chloroplast respiratory chain. The immediate electron acceptor for the enzyme in this species is believed to be plastoquinone. Couples the redox reaction to proton translocation, and thus conserves the redox energy in a proton gradient. The chain is NAD(P)H-quinone oxidoreductase subunit K, chloroplastic from Aethionema cordifolium (Lebanon stonecress).